The chain runs to 470 residues: GDP-Man:Man(3)GlcNAc(2)-PP-Dol alpha-1,2-mannosyltransferase (470 aa).

Over 1–15 the chain is Lumenal; sequence MSDTVISLISHSITT. The helical transmembrane segment at 16-36 threads the bilayer; the sequence is VFYLVPLIIALIIPFSLYSGF. The Cytoplasmic portion of the chain corresponds to 37-131; the sequence is RRKSKTVAFF…HYKHCTMLFQ (95 aa). The helical intramembrane region spans 132-152; sequence ALAGLILALEAWFRMVPAVFI. Topologically, residues 153 to 378 are cytoplasmic; that stretch reads DSMGYPLSLP…ISIHTMHNEH (226 aa). An intramembrane region (helical) is located at residues 379–399; the sequence is FGISVVEAMAASTIILSNDSG. Residues 400 to 470 lie on the Cytoplasmic side of the membrane; the sequence is GPRMDIVKDY…HWNKEIEKVL (71 aa).

The protein belongs to the glycosyltransferase group 1 family. Glycosyltransferase 4 subfamily.

The protein localises to the endoplasmic reticulum membrane. The catalysed reaction is an alpha-D-Man-(1-&gt;3)-[alpha-D-Man-(1-&gt;6)]-beta-D-Man-(1-&gt;4)-beta-D-GlcNAc-(1-&gt;4)-alpha-D-GlcNAc-diphospho-di-trans,poly-cis-dolichol + 2 GDP-alpha-D-mannose = an alpha-D-Man-(1-&gt;2)-alpha-D-Man-(1-&gt;2)-alpha-D-Man-(1-&gt;3)-[alpha-D-Man-(1-&gt;6)]-beta-D-Man-(1-&gt;4)-beta-D-GlcNAc-(1-&gt;4)-alpha-D-GlcNAc-diphospho-di-trans,poly-cis-dolichol + 2 GDP + 2 H(+). It functions in the pathway protein modification; protein glycosylation. Its function is as follows. GDP-Man:Man(3)GlcNAc(2)-PP-Dol alpha-1,2-mannosyltransferase that operates in the biosynthetic pathway of dolichol-linked oligosaccharides, the glycan precursors employed in protein asparagine (N)-glycosylation. The assembly of dolichol-linked oligosaccharides begins on the cytosolic side of the endoplasmic reticulum membrane and finishes in its lumen. The sequential addition of sugars to dolichol pyrophosphate produces dolichol-linked oligosaccharides containing fourteen sugars, including two GlcNAcs, nine mannoses and three glucoses. Once assembled, the oligosaccharide is transferred from the lipid to nascent proteins by oligosaccharyltransferases. Catalyzes, on the cytoplasmic face of the endoplasmic reticulum, the addition of the fourth and fifth mannose residues to the dolichol-linked oligosaccharide chain, to produce Man(5)GlcNAc(2)-PP-dolichol core oligosaccharide. Man(5)GlcNAc(2)-PP-dolichol is a substrate for ALG3, the following enzyme in the biosynthetic pathway. This chain is GDP-Man:Man(3)GlcNAc(2)-PP-Dol alpha-1,2-mannosyltransferase, found in Caenorhabditis elegans.